Reading from the N-terminus, the 466-residue chain is Serine/threonine-protein kinase SSN3 (466 aa).

The Protein kinase domain occupies 32 to 396 (YKILGFISSG…ARDALRHPWF (365 aa)). 38–46 (ISSGTYGRV) provides a ligand contact to ATP. The tract at residues 58–105 (ASAKSALPSSTRAALSLPKDKLPSPSFTEDSDPLNNPEMCMRPGDRPA) is disordered. Lys-114 lines the ATP pocket. Asp-216 serves as the catalytic Proton acceptor. The interval 421–466 (THEDNGDAKMGSLPQSMAGGRLPSSSNFRPASGNIVQPAARKKARI) is disordered.

The protein belongs to the protein kinase superfamily. CMGC Ser/Thr protein kinase family. CDC2/CDKX subfamily. In terms of assembly, component of the SRB8-11 complex, a regulatory module of the Mediator complex. It depends on Mg(2+) as a cofactor.

It localises to the nucleus. It carries out the reaction L-seryl-[protein] + ATP = O-phospho-L-seryl-[protein] + ADP + H(+). The enzyme catalyses L-threonyl-[protein] + ATP = O-phospho-L-threonyl-[protein] + ADP + H(+). The catalysed reaction is [DNA-directed RNA polymerase] + ATP = phospho-[DNA-directed RNA polymerase] + ADP + H(+). Functionally, component of the SRB8-11 complex. The SRB8-11 complex is a regulatory module of the Mediator complex which is itself involved in regulation of basal and activated RNA polymerase II-dependent transcription. The SRB8-11 complex may be involved in the transcriptional repression of a subset of genes regulated by Mediator. It may inhibit the association of the Mediator complex with RNA polymerase II to form the holoenzyme complex. The SRB8-11 complex phosphorylates the C-terminal domain (CTD) of the largest subunit of RNA polymerase II. The sequence is that of Serine/threonine-protein kinase SSN3 (SSN3) from Cryptococcus neoformans var. neoformans serotype D (strain B-3501A) (Filobasidiella neoformans).